Consider the following 159-residue polypeptide: Acetolactate synthase small subunit (159 aa).

The 75-residue stretch at 5-79 (ILSILLENES…DVLKVTEIED (75 aa)) folds into the ACT domain.

The protein belongs to the acetolactate synthase small subunit family. Dimer of large and small chains.

It catalyses the reaction 2 pyruvate + H(+) = (2S)-2-acetolactate + CO2. It functions in the pathway amino-acid biosynthesis; L-isoleucine biosynthesis; L-isoleucine from 2-oxobutanoate: step 1/4. Its pathway is amino-acid biosynthesis; L-valine biosynthesis; L-valine from pyruvate: step 1/4. This chain is Acetolactate synthase small subunit (ilvH), found in Buchnera aphidicola subsp. Baizongia pistaciae (strain Bp).